A 359-amino-acid chain; its full sequence is E3 ubiquitin-protein ligase RNF146 (359 aa).

The RING-type zinc-finger motif lies at 36 to 74 (CAICLQTCVHPVSLPCKHVFCYLCVKGASWLGKRCALCR). Glycyl lysine isopeptide (Lys-Gly) (interchain with G-Cter in ubiquitin) cross-links involve residues Lys84 and Lys94. The 77-residue stretch at 91–167 (EELKAASRGN…EHGRRRKIKR (77 aa)) folds into the WWE domain. Residues Tyr107, Arg110, and Trp114 each contribute to the a glycoprotein site. Residue Lys130 forms a Glycyl lysine isopeptide (Lys-Gly) (interchain with G-Cter in ubiquitin) linkage. A glycoprotein-binding residues include Tyr144, Gln153, Arg163, and Lys175. Lys175 is covalently cross-linked (Glycyl lysine isopeptide (Lys-Gly) (interchain with G-Cter in ubiquitin)). Residues 259-359 (ERSHRGEGEE…PDGQCTVTEV (101 aa)) are disordered. Over residues 284-298 (SVEETESDASSDSED) the composition is skewed to acidic residues. Ser290 and Ser294 each carry phosphoserine. Over residues 306–322 (HSLTQQRLLVPNANQTV) the composition is skewed to polar residues.

As to quaternary structure, can form homooligomers. Interacts with PARsylated AXIN1, AXIN2, BLZF1, CASC3, H1-2, IPO7, LIG3, NCL, PARP1, XRCC1, XRCC5 and XRCC6. Interacts with DDB1, DHX15, IQGAP1, LRPPRC, PARP2, PRKDC, RUVBL2, TNKS1 and TNKS2. Binding often leads to interactor ubiquitination, in the presence of the appropriate E1 and E2 enzymes, and proteasomal degradation. Ubiquitinated; autoubiquitinated. Autoubiquitination is enhanced upon poly(ADP-ribose)-binding.

The protein resides in the cytoplasm. Its subcellular location is the cytosol. It is found in the nucleus. The enzyme catalyses S-ubiquitinyl-[E2 ubiquitin-conjugating enzyme]-L-cysteine + [acceptor protein]-L-lysine = [E2 ubiquitin-conjugating enzyme]-L-cysteine + N(6)-ubiquitinyl-[acceptor protein]-L-lysine.. Its pathway is protein modification; protein ubiquitination. In terms of biological role, E3 ubiquitin-protein ligase that specifically binds poly-ADP-ribosylated (PARsylated) proteins and mediates their ubiquitination and subsequent degradation. May regulate many important biological processes, such as cell survival and DNA damage response. Acts as an activator of the Wnt signaling pathway by mediating the ubiquitination of PARsylated AXIN1 and AXIN2, 2 key components of the beta-catenin destruction complex. Acts in cooperation with tankyrase proteins (TNKS and TNKS2), which mediate PARsylation of target proteins AXIN1, AXIN2, BLZF1, CASC3, TNKS and TNKS2. Recognizes and binds tankyrase-dependent PARsylated proteins via its WWE domain and mediates their ubiquitination, leading to their degradation. Different ubiquitin linkage types have been observed: TNKS2 undergoes ubiquitination at 'Lys-48' and 'Lys-63', while AXIN1 is only ubiquitinated at 'Lys-48'. May regulate TNKS and TNKS2 subcellular location, preventing aggregation at a centrosomal location. Neuroprotective protein. Protects the brain against N-methyl-D-aspartate (NMDA) receptor-mediated glutamate excitotoxicity and ischemia, by interfering with PAR-induced cell death, called parthanatos. Prevents nuclear translocation of AIFM1 in a PAR-binding dependent manner. Does not affect PARP1 activation. Protects against cell death induced by DNA damaging agents, such as N-methyl-N-nitro-N-nitrosoguanidine (MNNG) and rescues cells from G1 arrest. Promotes cell survival after gamma-irradiation. Facilitates DNA repair. This Ailuropoda melanoleuca (Giant panda) protein is E3 ubiquitin-protein ligase RNF146 (RNF146).